A 116-amino-acid chain; its full sequence is Aspartate 1-decarboxylase (116 aa).

S25 functions as the Schiff-base intermediate with substrate; via pyruvic acid in the catalytic mechanism. Position 25 is a pyruvic acid (Ser) (S25). Residue T57 participates in substrate binding. The active-site Proton donor is Y58. 72 to 74 (GAA) provides a ligand contact to substrate.

The protein belongs to the PanD family. Heterooctamer of four alpha and four beta subunits. The cofactor is pyruvate. Is synthesized initially as an inactive proenzyme, which is activated by self-cleavage at a specific serine bond to produce a beta-subunit with a hydroxyl group at its C-terminus and an alpha-subunit with a pyruvoyl group at its N-terminus.

The protein localises to the cytoplasm. The enzyme catalyses L-aspartate + H(+) = beta-alanine + CO2. The protein operates within cofactor biosynthesis; (R)-pantothenate biosynthesis; beta-alanine from L-aspartate: step 1/1. Functionally, catalyzes the pyruvoyl-dependent decarboxylation of aspartate to produce beta-alanine. In Helicobacter pylori (strain HPAG1), this protein is Aspartate 1-decarboxylase.